We begin with the raw amino-acid sequence, 174 residues long: RNA pyrophosphohydrolase (174 aa).

Residues 6–149 enclose the Nudix hydrolase domain; that stretch reads GFRANVGIVI…KREVYRRAMK (144 aa). Residues 38-59 carry the Nudix box motif; that stretch reads GGIDEGETAEQTMYRELYEEVG.

It belongs to the Nudix hydrolase family. RppH subfamily. It depends on a divalent metal cation as a cofactor.

Its function is as follows. Accelerates the degradation of transcripts by removing pyrophosphate from the 5'-end of triphosphorylated RNA, leading to a more labile monophosphorylated state that can stimulate subsequent ribonuclease cleavage. This Pseudoalteromonas atlantica (strain T6c / ATCC BAA-1087) protein is RNA pyrophosphohydrolase.